A 101-amino-acid chain; its full sequence is NADH-quinone oxidoreductase subunit K (101 aa).

The next 3 helical transmembrane spans lie at 4 to 24 (LAHFLVLGAILFAISIVGIFL), 30 to 50 (IVLLMALELLLLAVNMNFVAF), and 61 to 81 (VFVFFILTVAAAESAIGLAIL).

It belongs to the complex I subunit 4L family. In terms of assembly, NDH-1 is composed of 14 different subunits. Subunits NuoA, H, J, K, L, M, N constitute the membrane sector of the complex.

It is found in the cell inner membrane. The enzyme catalyses a quinone + NADH + 5 H(+)(in) = a quinol + NAD(+) + 4 H(+)(out). In terms of biological role, NDH-1 shuttles electrons from NADH, via FMN and iron-sulfur (Fe-S) centers, to quinones in the respiratory chain. The immediate electron acceptor for the enzyme in this species is believed to be ubiquinone. Couples the redox reaction to proton translocation (for every two electrons transferred, four hydrogen ions are translocated across the cytoplasmic membrane), and thus conserves the redox energy in a proton gradient. The polypeptide is NADH-quinone oxidoreductase subunit K (Cupriavidus metallidurans (strain ATCC 43123 / DSM 2839 / NBRC 102507 / CH34) (Ralstonia metallidurans)).